The primary structure comprises 205 residues: Arginine exporter protein ArgO (205 aa).

6 consecutive transmembrane segments (helical) span residues 1-21, 37-57, 68-88, 112-132, 147-167, and 182-202; these read MLAV…PLGP, LMVA…GIFG, LLAL…WGAF, VVTM…TFVV, WFAL…ALLA, and IINT…AWQG.

It belongs to the LysE/ArgO transporter (TC 2.A.75) family.

It localises to the cell inner membrane. It carries out the reaction L-arginine(in) = L-arginine(out). Functionally, involved in the export of arginine. Important to control the intracellular level of arginine and the correct balance between arginine and lysine. In Serratia proteamaculans (strain 568), this protein is Arginine exporter protein ArgO.